The primary structure comprises 161 residues: Phosphopantetheine adenylyltransferase (161 aa).

Substrate is bound at residue T10. Residues 10-11 (TF) and H18 contribute to the ATP site. Substrate-binding residues include K42, M74, and R88. Residues 89-91 (GLR), E99, and 124-130 (WSFISSS) contribute to the ATP site.

The protein belongs to the bacterial CoaD family. As to quaternary structure, homohexamer. The cofactor is Mg(2+).

The protein resides in the cytoplasm. The catalysed reaction is (R)-4'-phosphopantetheine + ATP + H(+) = 3'-dephospho-CoA + diphosphate. It functions in the pathway cofactor biosynthesis; coenzyme A biosynthesis; CoA from (R)-pantothenate: step 4/5. Its function is as follows. Reversibly transfers an adenylyl group from ATP to 4'-phosphopantetheine, yielding dephospho-CoA (dPCoA) and pyrophosphate. The sequence is that of Phosphopantetheine adenylyltransferase from Serratia proteamaculans (strain 568).